The sequence spans 35 residues: Flavodoxin (35 aa).

Positions 4–35 (IGLFYGTZTGKTESVAEIIDEFGDEVVTLDID) constitute a Flavodoxin-like domain.

The protein belongs to the flavodoxin family. FMN is required as a cofactor.

Its function is as follows. Low-potential electron donor to a number of redox enzymes. This is Flavodoxin from Nostoc sp. (strain MAC).